Here is a 101-residue protein sequence, read N- to C-terminus: TrfB transcriptional repressor protein (101 aa).

A DNA-binding region (H-T-H motif) is located at residues 37-56 (QATFATSLGLTRGAVSQAVH).

In conjunction with KorB, inhibits the transcription of kilA, trfA and korAB operons. In conjunction with KorC is responsible for the negative control of kilC and kilE operons. This Escherichia coli protein is TrfB transcriptional repressor protein (trfB).